The primary structure comprises 332 residues: tRNA-dihydrouridine synthase B (332 aa).

Residues Pro-19 to Ala-21 and Gln-73 each bind FMN. The active-site Proton donor is the Cys-103. Residues Lys-142, Asn-203–Asp-205, and Gly-227–Arg-228 contribute to the FMN site.

The protein belongs to the Dus family. DusB subfamily. The cofactor is FMN.

It catalyses the reaction a 5,6-dihydrouridine in tRNA + NAD(+) = a uridine in tRNA + NADH + H(+). The catalysed reaction is a 5,6-dihydrouridine in tRNA + NADP(+) = a uridine in tRNA + NADPH + H(+). Its function is as follows. Catalyzes the synthesis of 5,6-dihydrouridine (D), a modified base found in the D-loop of most tRNAs, via the reduction of the C5-C6 double bond in target uridines. The chain is tRNA-dihydrouridine synthase B from Pseudomonas aeruginosa (strain ATCC 15692 / DSM 22644 / CIP 104116 / JCM 14847 / LMG 12228 / 1C / PRS 101 / PAO1).